We begin with the raw amino-acid sequence, 617 residues long: Chaperone protein HscA homolog (617 aa).

The protein belongs to the heat shock protein 70 family.

Chaperone involved in the maturation of iron-sulfur cluster-containing proteins. Has a low intrinsic ATPase activity which is markedly stimulated by HscB. The sequence is that of Chaperone protein HscA homolog from Actinobacillus pleuropneumoniae serotype 5b (strain L20).